Here is a 63-residue protein sequence, read N- to C-terminus: Large ribosomal subunit protein bL28 (63 aa).

The tract at residues 1–21 (MSRRDDLTGKGPMFGNNRSHA) is disordered.

The protein belongs to the bacterial ribosomal protein bL28 family.

The sequence is that of Large ribosomal subunit protein bL28 from Mycoplasmopsis pulmonis (strain UAB CTIP) (Mycoplasma pulmonis).